A 64-amino-acid polypeptide reads, in one-letter code: Large ribosomal subunit protein uL29 (64 aa).

It belongs to the universal ribosomal protein uL29 family.

The polypeptide is Large ribosomal subunit protein uL29 (Thiobacillus denitrificans (strain ATCC 25259 / T1)).